The following is a 512-amino-acid chain: ATP synthase subunit alpha (512 aa).

169 to 176 (GDRQTGKT) contributes to the ATP binding site.

The protein belongs to the ATPase alpha/beta chains family. As to quaternary structure, F-type ATPases have 2 components, CF(1) - the catalytic core - and CF(0) - the membrane proton channel. CF(1) has five subunits: alpha(3), beta(3), gamma(1), delta(1), epsilon(1). CF(0) has three main subunits: a(1), b(2) and c(9-12). The alpha and beta chains form an alternating ring which encloses part of the gamma chain. CF(1) is attached to CF(0) by a central stalk formed by the gamma and epsilon chains, while a peripheral stalk is formed by the delta and b chains.

It localises to the cell membrane. It carries out the reaction ATP + H2O + 4 H(+)(in) = ADP + phosphate + 5 H(+)(out). Functionally, produces ATP from ADP in the presence of a proton gradient across the membrane. The alpha chain is a regulatory subunit. The polypeptide is ATP synthase subunit alpha (Buchnera aphidicola subsp. Acyrthosiphon pisum (strain Tuc7)).